Consider the following 830-residue polypeptide: Serine/threonine-protein kinase pkn2 (830 aa).

Residues 1 to 605 (MLAPDSLVLD…GELLRQRRRE (605 aa)) lie on the Cytoplasmic side of the membrane. A Protein kinase domain is found at 13–283 (FRVLRPLGSG…DALAAAHSAL (271 aa)). Residues 19 to 27 (LGSGGMGEV) and Lys42 contribute to the ATP site. Asp135 functions as the Proton acceptor in the catalytic mechanism. A disordered region spans residues 296 to 326 (VPQPGSGATPSSGTSVFGTGSASGSSSGPTG). The segment covering 299-326 (PGSGATPSSGTSVFGTGSASGSSSGPTG) has biased composition (low complexity). One can recognise a Guanylate cyclase domain in the interval 396–511 (TVMLTDIQGF…EPMEVIEAVE (116 aa)). The helical transmembrane segment at 606-623 (AALVAGAVVLLGAGAAWL) threads the bilayer. At 624-830 (SQRNDAGTRA…AIKSLKQKSD (207 aa)) the chain is on the periplasmic side.

It belongs to the protein kinase superfamily. Ser/Thr protein kinase family.

Its subcellular location is the cell membrane. It carries out the reaction L-seryl-[protein] + ATP = O-phospho-L-seryl-[protein] + ADP + H(+). It catalyses the reaction L-threonyl-[protein] + ATP = O-phospho-L-threonyl-[protein] + ADP + H(+). Regulates the activity of endogenous beta-lactamase or related enzymes, by blocking their secretion by phosphorylation, in response to an external signal yet to be identified. The chain is Serine/threonine-protein kinase pkn2 (pkn2) from Myxococcus xanthus.